Here is a 311-residue protein sequence, read N- to C-terminus: Putative F-box protein At1g31090 (311 aa).

Residues 4 to 53 (GANSDSIPTDLIYEILSRLSVKPITRFRCVSKLWESIICRQDFTELFHNR) enclose the F-box domain. Positions 287–311 (RPAEQNTSTSSREDHLVRTVKRKRA) are disordered.

This chain is Putative F-box protein At1g31090, found in Arabidopsis thaliana (Mouse-ear cress).